We begin with the raw amino-acid sequence, 219 residues long: Small ribosomal subunit protein uS3 (219 aa).

The region spanning 38-106 (IRKYINTKLA…KVHINIVEIK (69 aa)) is the KH type-2 domain.

The protein belongs to the universal ribosomal protein uS3 family. Part of the 30S ribosomal subunit. Forms a tight complex with proteins S10 and S14.

Functionally, binds the lower part of the 30S subunit head. Binds mRNA in the 70S ribosome, positioning it for translation. This is Small ribosomal subunit protein uS3 from Latilactobacillus sakei subsp. sakei (strain 23K) (Lactobacillus sakei subsp. sakei).